The chain runs to 297 residues: Farnesyl diphosphate synthase (297 aa).

The isopentenyl diphosphate site is built by Lys-47, Arg-50, and His-79. The Mg(2+) site is built by Asp-86 and Asp-92. Arg-97 is a binding site for (2E)-geranyl diphosphate. Isopentenyl diphosphate is bound at residue Arg-98. Residues Lys-183, Thr-184, Gln-221, and Lys-238 each contribute to the (2E)-geranyl diphosphate site.

This sequence belongs to the FPP/GGPP synthase family. Requires Mg(2+) as cofactor.

Its subcellular location is the cytoplasm. It carries out the reaction isopentenyl diphosphate + (2E)-geranyl diphosphate = (2E,6E)-farnesyl diphosphate + diphosphate. The sequence is that of Farnesyl diphosphate synthase from Geobacillus stearothermophilus (Bacillus stearothermophilus).